A 111-amino-acid chain; its full sequence is Resistin-like alpha (111 aa).

An N-terminal signal peptide occupies residues 1–23 (MKTTTCSLLICISLLQLMVPVNT). 5 cysteine pairs are disulfide-bonded: Cys55–Cys108, Cys67–Cys107, Cys76–Cys93, Cys78–Cys95, and Cys82–Cys97.

Belongs to the resistin/FIZZ family. In terms of assembly, monomer. Highest levels in adipose tissue.

It is found in the secreted. Its function is as follows. Probable hormone. Plays a role in pulmonary vascular remodeling. This Mus musculus (Mouse) protein is Resistin-like alpha (Retnla).